A 246-amino-acid polypeptide reads, in one-letter code: Carbonic anhydrase (246 aa).

A signal peptide spans 1–22 (MKTSLGKAALLALSMMPVTVFA). Residues 23 to 246 (SHWSYEGEGS…QPLNGRVVIE (224 aa)) form the Alpha-carbonic anhydrase domain. Cys46 and Cys201 form a disulfide bridge. His84 acts as the Proton acceptor in catalysis. Residues His111, His113, and His130 each coordinate Zn(2+). 197–198 (TT) is a substrate binding site.

Belongs to the alpha-carbonic anhydrase family. Zn(2+) is required as a cofactor.

Its subcellular location is the periplasm. The enzyme catalyses hydrogencarbonate + H(+) = CO2 + H2O. In terms of biological role, reversible hydration of carbon dioxide. The protein is Carbonic anhydrase (cah) of Klebsiella pneumoniae.